A 623-amino-acid chain; its full sequence is Probable methyltransferase PMT8 (623 aa).

Topologically, residues Met-1 to Arg-13 are cytoplasmic. Residues Leu-14–Ser-34 traverse the membrane as a helical; Signal-anchor for type II membrane protein segment. The Lumenal segment spans residues Ser-35–Glu-623. Residues Asn-204, Asn-350, and Asn-588 are each glycosylated (N-linked (GlcNAc...) asparagine).

It belongs to the methyltransferase superfamily.

The protein localises to the golgi apparatus membrane. The protein is Probable methyltransferase PMT8 of Arabidopsis thaliana (Mouse-ear cress).